The sequence spans 253 residues: MLKTRIIPCLDVADGRVVKGVNFVDLRDAGDPVEAARAYDAAGADELCFLDIHATHENRGTMYDLVTRTAEQCFMPLTVGGGVRTHQDVRALLLAGADKVSFNSAAVADPGVVAEAADRFGSQCIVVAIDAKTVAPGRWEIFTHGGRRATGIDAVAFACEMASRGAGEILLTSMDRDGTRAGFNLPLTRAISDAVPIPVIASGGVGTLDHLVEGVTEGGASAVLAASIFHFGEFTIGEAKAHMAAAGIPVRLA.

Active-site residues include aspartate 11 and aspartate 130.

This sequence belongs to the HisA/HisF family. Heterodimer of HisH and HisF.

Its subcellular location is the cytoplasm. It catalyses the reaction 5-[(5-phospho-1-deoxy-D-ribulos-1-ylimino)methylamino]-1-(5-phospho-beta-D-ribosyl)imidazole-4-carboxamide + L-glutamine = D-erythro-1-(imidazol-4-yl)glycerol 3-phosphate + 5-amino-1-(5-phospho-beta-D-ribosyl)imidazole-4-carboxamide + L-glutamate + H(+). It participates in amino-acid biosynthesis; L-histidine biosynthesis; L-histidine from 5-phospho-alpha-D-ribose 1-diphosphate: step 5/9. Functionally, IGPS catalyzes the conversion of PRFAR and glutamine to IGP, AICAR and glutamate. The HisF subunit catalyzes the cyclization activity that produces IGP and AICAR from PRFAR using the ammonia provided by the HisH subunit. This Cereibacter sphaeroides (strain ATCC 17023 / DSM 158 / JCM 6121 / CCUG 31486 / LMG 2827 / NBRC 12203 / NCIMB 8253 / ATH 2.4.1.) (Rhodobacter sphaeroides) protein is Imidazole glycerol phosphate synthase subunit HisF (hisF).